The sequence spans 96 residues: MSAVLSTENGLILKLYIQPKASRDQIVGLHGDELKVAITAPPVDGQANTHLVKFIAKQFRVAKSQVIIEKGELGRHKQIKVINPQQIPPEVTILLE.

This sequence belongs to the UPF0235 family.

The sequence is that of UPF0235 protein YPN_3141 from Yersinia pestis bv. Antiqua (strain Nepal516).